Reading from the N-terminus, the 156-residue chain is Small ribosomal subunit protein uS7 (156 aa).

It belongs to the universal ribosomal protein uS7 family. As to quaternary structure, part of the 30S ribosomal subunit. Contacts proteins S9 and S11.

Functionally, one of the primary rRNA binding proteins, it binds directly to 16S rRNA where it nucleates assembly of the head domain of the 30S subunit. Is located at the subunit interface close to the decoding center, probably blocks exit of the E-site tRNA. In Dehalococcoides mccartyi (strain ATCC BAA-2266 / KCTC 15142 / 195) (Dehalococcoides ethenogenes (strain 195)), this protein is Small ribosomal subunit protein uS7.